Here is a 601-residue protein sequence, read N- to C-terminus: Keratin, type II cytoskeletal 5 (601 aa).

Residues 1-168 (MSRQSTVSFR…DPTIQRVRTE (168 aa)) are head. Phosphoserine occurs at positions 5, 8, 16, and 21. T24 carries the phosphothreonine; by CDK1 modification. Residues S26, S36, S50, S64, S71, and S75 each carry the phosphoserine modification. The residue at position 152 (T152) is a Phosphothreonine; by CDK1. Position 167 is a phosphothreonine; by AURKB (T167). The interval 169–204 (EREQIKTLNNKFASFIDKVRFLEQQNKVLDTKWALL) is coil 1A. One can recognise an IF rod domain in the interval 169–482 (EREQIKTLNN…KLLEGEECRL (314 aa)). The tract at residues 205–223 (QEQGTKTVRQNLEPLLEQY) is linker 1. The coil 1B stretch occupies residues 224 to 316 (INNLRRQLDG…FFDAELSQMQ (93 aa)). The tract at residues 317–339 (THVSDTSVVLSMDNNRSLDLDSI) is linker 12. The tract at residues 340–478 (IAEVKAQYED…ATYRKLLEGE (139 aa)) is coil 2. The tail stretch occupies residues 479–601 (ECRLSGEGVG…TSSSRKSFKS (123 aa)). The disordered stretch occupies residues 576–601 (FGSGGGSSSSVKFVSTTSSSRKSFKS). Over residues 583-601 (SSSVKFVSTTSSSRKSFKS) the composition is skewed to low complexity.

Belongs to the intermediate filament family. As to quaternary structure, heterodimer of a type I and a type II keratin. Heterodimer with type I keratin KRT25 leading to the formation of keratin intermediate filament (KIF) network. Forms a heterodimer (via 2B domains) with KRT14 (via 2B domains). Interacts with TCHP. Interacts with EPPK1. Interacts with AMELX. Interacts with PKP1 (via N-terminus) and PKP2. In terms of processing, phosphorylated by CDK1, AURKB and Rho-kinase, phosphorylation is regulated by the cell cycle. Thr-24 phosphorylation, mediated by CDK1, peaks during prometaphase or metaphase cells with phosphorylated filamentous structures evident throughout the cytoplasm early mitosis. CDK1 phosphorylates Thr-24 in mitotic cells at the site of injury. O-glycosylated.

The protein resides in the cytoplasm. Required for the formation of keratin intermediate filaments in the basal epidermis and maintenance of the skin barrier in response to mechanical stress. Regulates the recruitment of Langerhans cells to the epidermis, potentially by modulation of the abundance of macrophage chemotactic cytokines, macrophage inflammatory cytokines and CTNND1 localization in keratinocytes. The protein is Keratin, type II cytoskeletal 5 of Bos taurus (Bovine).